A 218-amino-acid polypeptide reads, in one-letter code: MRLILLGAPGAGKGTQAGFICQRYGIPQISTGDMLRAAVKAGTPLGLQAKAVMDSGSLVSDDIIIHLVKERIAQPDCAQGFLFDGFPRTIAQADALKAAGVRLDYVLEIDVPFEAIIERMSGRRSHPASGRTYHVRFNPPKIDGKDDLTGEALLQREDDKEETVRKRLQVYSAQTRPLVDYYSHWARVEPAAAPRYRCISGTGRVDEITARALQALAC.

Residue 10–15 (GAGKGT) coordinates ATP. The segment at 30–59 (STGDMLRAAVKAGTPLGLQAKAVMDSGSLV) is NMP. Residues T31, R36, 57–59 (SLV), 85–88 (GFPR), and Q92 contribute to the AMP site. The interval 122 to 159 (GRRSHPASGRTYHVRFNPPKIDGKDDLTGEALLQREDD) is LID. Residues R123 and 132-133 (TY) contribute to the ATP site. AMP-binding residues include R156 and R167. G203 is a binding site for ATP.

It belongs to the adenylate kinase family. In terms of assembly, monomer.

Its subcellular location is the cytoplasm. It catalyses the reaction AMP + ATP = 2 ADP. Its pathway is purine metabolism; AMP biosynthesis via salvage pathway; AMP from ADP: step 1/1. Functionally, catalyzes the reversible transfer of the terminal phosphate group between ATP and AMP. Plays an important role in cellular energy homeostasis and in adenine nucleotide metabolism. This is Adenylate kinase from Verminephrobacter eiseniae (strain EF01-2).